A 437-amino-acid polypeptide reads, in one-letter code: MGKNVVVLGTQWGDEGKGKVVDLLTDKASLVVRYQGGHNAGHTLVIDGEKTVLHLIPSGVLRDNVKCVIGNGVVLSPEALMREIGMLEARGVPVRERLLISAACPLILPFHVALDVARETARGDKPIGTTGRGIGPAYEDKVARRGLRVGDLFNPELFAAKLEEVLEYHNFTLVNYYKVDAVDFQKTFDDAMAVADILKAMIVDVTELLDQTRLAGDNILFEGAQGTLLDIDHGTYPYVTSSNTTAGGVATGAGFGPLHLDYVLGIIKAYTTRVGSGPFPTELYDGLDKQDPVGKHLGDKGHEFGATTGRLRRTGWLDAVAMRRAVQINSISGFCLTKLDVLDGLETLKICTGYKLEDGTVTNVTPLAAEGYEKVTPIYEEMPGWSENTVGVTSLDGLPKAAIDYVKRIEELTGVPVDIISTGPDRVETMILRNPFA.

Residues 13-19 (GDEGKGK) and 41-43 (GHT) each bind GTP. The Proton acceptor role is filled by Asp-14. Mg(2+) is bound by residues Asp-14 and Gly-41. Residues 14–17 (DEGK), 39–42 (NAGH), Thr-130, Arg-144, Gln-225, Thr-240, and Arg-310 each bind IMP. The Proton donor role is filled by His-42. 306–312 (ATTGRLR) provides a ligand contact to substrate. Residues Arg-312, 338–340 (KLD), and 421–423 (STG) each bind GTP.

The protein belongs to the adenylosuccinate synthetase family. Homodimer. Mg(2+) serves as cofactor.

Its subcellular location is the cytoplasm. The catalysed reaction is IMP + L-aspartate + GTP = N(6)-(1,2-dicarboxyethyl)-AMP + GDP + phosphate + 2 H(+). Its pathway is purine metabolism; AMP biosynthesis via de novo pathway; AMP from IMP: step 1/2. Functionally, plays an important role in the de novo pathway of purine nucleotide biosynthesis. Catalyzes the first committed step in the biosynthesis of AMP from IMP. The sequence is that of Adenylosuccinate synthetase 1 from Pseudoalteromonas translucida (strain TAC 125).